We begin with the raw amino-acid sequence, 238 residues long: Ras association domain-containing protein 3 (238 aa).

Residue Ser-2 is modified to N-acetylserine. Residues 26–48 (RAPQGKPRSGQQDVEKEKETHSY) are disordered. Over residues 38 to 48 (DVEKEKETHSY) the composition is skewed to basic and acidic residues. A Ras-associating domain is found at 79–186 (YTGFIKVQME…TLSFVLREHE (108 aa)). Residues 187–234 (IGEWEAFSLPELQNFLRILDKEEDEQLQNLKRRYTAYRQKLEEALREV) enclose the SARAH domain.

Widely expressed.

The protein resides in the cytoplasm. Its subcellular location is the cytoskeleton. The chain is Ras association domain-containing protein 3 (RASSF3) from Homo sapiens (Human).